The primary structure comprises 425 residues: Pectate lyase L (425 aa).

Residues 1–25 (MKYLNCFISTGLAAFFLVNSTSVLA) form the signal peptide. Cysteine 28 and cysteine 114 are joined by a disulfide. Aspartate 209, aspartate 233, aspartate 234, and aspartate 237 together coordinate Ca(2+). Residue lysine 273 is the Proton acceptor of the active site. 5 residues coordinate Ca(2+): asparagine 402, serine 413, alanine 416, aspartate 418, and glutamate 423.

Belongs to the polysaccharide lyase 9 family. Requires Ca(2+) as cofactor.

The protein resides in the secreted. It catalyses the reaction Eliminative cleavage of (1-&gt;4)-alpha-D-galacturonan to give oligosaccharides with 4-deoxy-alpha-D-galact-4-enuronosyl groups at their non-reducing ends.. The protein operates within glycan metabolism; pectin degradation; 2-dehydro-3-deoxy-D-gluconate from pectin: step 2/5. In terms of biological role, presents an endo-cleaving activity on polygalacturonate or partially methylated pectin. This chain is Pectate lyase L (pelL), found in Dickeya chrysanthemi (Pectobacterium chrysanthemi).